The sequence spans 1339 residues: MSGGNDGASWRLSRKPNAPNFDETQEDQWRSLREEVLQSDEDENIPESGDLTIPQLPSAKKAAKKLRKPPSGAKPTPKPKQQTLAQSMSDMDMERLLKRYRIDEDIDIAEDIDMSHLLQLHSDSDDGGDAQEATLTADEFLARLARAEAAPAASIAKEKRESGENVTVVALKDELFNVERDQSAKPPRPRPTPGAGGGAGYRNEETPKQAIELTATLAPQMDAAQFVSPAVPYKSGEMTEGLFYWFDAREQPHTLSVDPGSLFLFGKMAVEKNGRTSYLSCCVRVRNMYRSVFVLPKAGSSQEDVVKEINDICRNQGIEQRRIKFVERYYAFEVPGVPHEKTQWAKLRYPGRYPPLNAKGPFRHILIIMGASSSLLELFLIKRKLKGPSFLRISGLVASANRISHCALEFSVESPKNLRAEDTKLPVPPFTLASIQIHTQLDSKGACNEILIASVAIYKDVNIENTIRYIPDNILTGVRPASMSTPLPIDLESYCSAKGLPGVRRFANERALLDWLAQQLGKIDADMMIGHNFLGFTLDILLRRYQELSISSWSTIGRLDLKRLPRFQGTATNVNQEKETCIGRLVVDSYSLSREHYKTVNYRLLSLADQMQLQGITKGSNNFEPGTSVLTPAMLSASRDIYDVLLQVCNCAVLSTAVVSHLDVIRLTKRLTTIAGNLWSRTLFGARSERIEYLLLHTFHDLKFITPDRYVQNFKRGRDDEEEEDGKRKAKYQGGMVLDPKCGLYSDYILLLDFNSLYPSLIQEFNICFTTVDRESGSEIDVPPPENLICASCAAAGLSAPCLHKCVLPKVIKSLVDSRREVKRLMKIEKDANNLALLEIRQKALKLTANSMYGCLGFEYSRFHAQPLAELVTRQGRLALQSTVDLIPQLNPSLRVIYGDTDSVMIQTGIKNDIKAVRDLGLDLKAKINKRYQSLEIDIDGVFRAILLLKKKKYAALTVTDWQGEGKTYKKEVKGLDMVRRDWCPLSKCVCDSVLSRVLNAEGSEDILDYVMNYMRDVSEKVRAGRYTLDNFVISKSLTKEPEAYRGNSFPHATVALRMKQRKELVRVGDLIPYVICTGDRLSDKAFHVEEVRQNSQLQIDSEWYLSVQIYPPVMRLCEHIQGFSNAQLSEAMGIACHTGAKLEEEEAETMNDFSHSSLFQSRNLEECFPAALSLQVACTHCRLMTPINPHTRVMEVLADQERQRDRFDLYVCVSCRKSLPVDYVANCFTQTCYGIIRQFYQCGSAAAVKAVRTQFTYYRALFDVPHAPGCPARVKDAHYYQARRCLGVDRRLYTLAEAADPAVQEVADPVDPLNAAAETIYKRIDHLFINLDSLFAGI.

Disordered stretches follow at residues 1–90 (MSGG…SMSD) and 177–203 (NVER…GYRN). Over residues 27–36 (DQWRSLREEV) the composition is skewed to basic and acidic residues. Polar residues predominate over residues 79–89 (PKQQTLAQSMS). Cys-1179, Cys-1182, Cys-1213, Cys-1216, Cys-1233, Cys-1243, Cys-1271, and Cys-1286 together coordinate Zn(2+). The CysA-type zinc finger occupies 1179-1216 (CTHCRLMTPINPHTRVMEVLADQERQRDRFDLYVCVSC). The CysB motif signature appears at 1243–1271 (CGSAAAVKAVRTQFTYYRALFDVPHAPGC).

The protein belongs to the DNA polymerase type-B family.

Its subcellular location is the nucleus. The catalysed reaction is DNA(n) + a 2'-deoxyribonucleoside 5'-triphosphate = DNA(n+1) + diphosphate. Polymerase alpha in a complex with DNA primase is a replicative polymerase. This Leishmania donovani protein is DNA polymerase alpha catalytic subunit.